A 464-amino-acid polypeptide reads, in one-letter code: Plant intracellular Ras-group-related LRR protein 3 (464 aa).

The stretch at 106-138 (AAVVSLEEVHEGYEKQLRDLEEEIGRVYASAVE) forms a coiled coil. LRR repeat units lie at residues 160–183 (GGVV…LGKI), 184–206 (VGLV…ISGL), 207–230 (EKLE…GLLL), 232–252 (LRIL…IAQC), 254–275 (SLVE…FGYG), 276–299 (LLNL…ICEM), 301–322 (SLRY…IGRL), 323–347 (TNLE…ISDL), 348–370 (ANLR…FFRL), and 372–393 (KLEK…MVNQ). Residues 398-406 (VREFMRKRW) carry the GVYW; degenerate motif.

It belongs to the SHOC2 family. Widely expressed.

Its function is as follows. Leucine-rich repeat protein that likely mediates protein interactions, possibly in the context of signal transduction. This is Plant intracellular Ras-group-related LRR protein 3 (PIRL3) from Arabidopsis thaliana (Mouse-ear cress).